The sequence spans 379 residues: Inactive 2'-5'-oligoadenylate synthase 1B (379 aa).

The Cytoplasmic segment spans residues 1–355 (MEQELRSIPA…VPTEVDIPSQ (355 aa)). Residues 356-374 (NYFFHIICLIFWLLLRLIF) form a helical; Anchor for type IV membrane protein membrane-spanning segment. At 375 to 379 (GKHSV) the chain is on the extracellular side.

This sequence belongs to the 2-5A synthase family. In terms of assembly, interacts with OSBPL1A and ABCF3. Highly expressed in the brain, liver, spleen and heart.

It localises to the endoplasmic reticulum membrane. Does not have 2'-5'-OAS activity, but can bind double-stranded RNA. Displays antiviral activity against viruses via an alternative antiviral pathway independent of RNase L. The polypeptide is Inactive 2'-5'-oligoadenylate synthase 1B (Oas1b) (Rattus norvegicus (Rat)).